Reading from the N-terminus, the 207-residue chain is Microtubule-associated protein Jupiter (207 aa).

Serine 30 carries the post-translational modification Phosphoserine. Phosphothreonine occurs at positions 41 and 102. A phosphoserine mark is found at serine 111, serine 138, and serine 149. Disordered regions lie at residues 129-174 and 188-207; these read KGKY…YKAG and GNQV…SGLW. Residues 136–149 show a composition bias toward low complexity; the sequence is SGSVSSASSSVSSS. Residues 150 to 164 are compositionally biased toward polar residues; the sequence is TENLKINVGNRSDGN.

It belongs to the MAP Jupiter family.

The protein resides in the nucleus. It localises to the cytoplasm. It is found in the cytoskeleton. Its subcellular location is the spindle. Binds to all microtubule populations. The protein is Microtubule-associated protein Jupiter of Drosophila grimshawi (Hawaiian fruit fly).